The chain runs to 553 residues: Methionine--tRNA ligase (553 aa).

The short motif at 12–22 is the 'HIGH' region element; that stretch reads PYANSQLHLGH. Residues C144, C147, C157, and C160 each coordinate Zn(2+). Positions 332 to 336 match the 'KMSKS' region motif; that stretch reads KFSKS. K335 contributes to the ATP binding site.

Belongs to the class-I aminoacyl-tRNA synthetase family. MetG type 1 subfamily. In terms of assembly, monomer. The cofactor is Zn(2+).

It localises to the cytoplasm. It catalyses the reaction tRNA(Met) + L-methionine + ATP = L-methionyl-tRNA(Met) + AMP + diphosphate. Is required not only for elongation of protein synthesis but also for the initiation of all mRNA translation through initiator tRNA(fMet) aminoacylation. This is Methionine--tRNA ligase from Dehalococcoides mccartyi (strain CBDB1).